The following is a 1178-amino-acid chain: DNA-directed RNA polymerase subunit beta' (1178 aa).

Cys-60, Cys-62, Cys-75, and Cys-78 together coordinate Zn(2+). Mg(2+) is bound by residues Asp-450, Asp-452, and Asp-454. Cys-795, Cys-869, Cys-876, and Cys-879 together coordinate Zn(2+).

Belongs to the RNA polymerase beta' chain family. As to quaternary structure, the RNAP catalytic core consists of 2 alpha, 1 beta, 1 beta' and 1 omega subunit. When a sigma factor is associated with the core the holoenzyme is formed, which can initiate transcription. It depends on Mg(2+) as a cofactor. Zn(2+) is required as a cofactor.

The catalysed reaction is RNA(n) + a ribonucleoside 5'-triphosphate = RNA(n+1) + diphosphate. Its function is as follows. DNA-dependent RNA polymerase catalyzes the transcription of DNA into RNA using the four ribonucleoside triphosphates as substrates. The chain is DNA-directed RNA polymerase subunit beta' from Clostridium botulinum (strain Loch Maree / Type A3).